A 211-amino-acid polypeptide reads, in one-letter code: Redox-sensing transcriptional repressor Rex (211 aa).

The H-T-H motif DNA-binding region spans 17–56; it reads LYYRFVSILKGKGIDRVNSKTISEALQIDSATIRRDFSYF. Position 91 to 96 (91 to 96) interacts with NAD(+); sequence GIGNLG.

Belongs to the transcriptional regulatory Rex family. In terms of assembly, homodimer.

It localises to the cytoplasm. In terms of biological role, modulates transcription in response to changes in cellular NADH/NAD(+) redox state. This chain is Redox-sensing transcriptional repressor Rex, found in Staphylococcus epidermidis (strain ATCC 35984 / DSM 28319 / BCRC 17069 / CCUG 31568 / BM 3577 / RP62A).